Reading from the N-terminus, the 328-residue chain is Protein FAM76B (328 aa).

The disordered stretch occupies residues 143 to 232 (KEQRKGLGSS…ITQSMDSGGT (90 aa)). A compositionally biased stretch (low complexity) spans 148-159 (GLGSSHSNSSSL). Basic residues predominate over residues 165 to 183 (QRHHHHHQHHRHGSSHHKI). Residues 185–201 (GNLSPEQDQGLWKQSIQ) show a composition bias toward polar residues. Serine 188 carries the phosphoserine modification. Over residues 203–213 (ETPKKKPKLET) the composition is skewed to basic and acidic residues. Polar residues predominate over residues 216 to 232 (SNGDSSSITQSMDSGGT). A coiled-coil region spans residues 237 to 316 (LISQLKEEVM…KQVAALSKGK (80 aa)).

Belongs to the FAM76 family. In terms of tissue distribution, highly expressed in hematopoietic and immune systems including in the thymus, spleen, kidney, and blood vessel.

Its function is as follows. Plays a role in hematopoiesis and immune system development, and participates in the inflammatory response. The chain is Protein FAM76B (fam76b) from Danio rerio (Zebrafish).